A 373-amino-acid polypeptide reads, in one-letter code: Phosphoserine aminotransferase (373 aa).

R46 contacts L-glutamate. The pyridoxal 5'-phosphate site is built by F104, T150, D172, and Q195. K196 is modified (N6-(pyridoxal phosphate)lysine). Residue 247-248 coordinates pyridoxal 5'-phosphate; sequence NT.

It belongs to the class-V pyridoxal-phosphate-dependent aminotransferase family. SerC subfamily. Homodimer. Pyridoxal 5'-phosphate serves as cofactor.

It localises to the cytoplasm. The enzyme catalyses O-phospho-L-serine + 2-oxoglutarate = 3-phosphooxypyruvate + L-glutamate. It catalyses the reaction 4-(phosphooxy)-L-threonine + 2-oxoglutarate = (R)-3-hydroxy-2-oxo-4-phosphooxybutanoate + L-glutamate. Its pathway is amino-acid biosynthesis; L-serine biosynthesis; L-serine from 3-phospho-D-glycerate: step 2/3. It participates in cofactor biosynthesis; pyridoxine 5'-phosphate biosynthesis; pyridoxine 5'-phosphate from D-erythrose 4-phosphate: step 3/5. Functionally, catalyzes the reversible conversion of 3-phosphohydroxypyruvate to phosphoserine and of 3-hydroxy-2-oxo-4-phosphonooxybutanoate to phosphohydroxythreonine. The protein is Phosphoserine aminotransferase of Rhodococcus jostii (strain RHA1).